The chain runs to 94 residues: Large ribosomal subunit protein eL42 (94 aa).

Positions 11, 14, 71, and 74 each coordinate Zn(2+). A C4-type zinc finger spans residues 11 to 74 (CPFCKRHTIH…LDLRFRCTVC (64 aa)).

The protein belongs to the eukaryotic ribosomal protein eL42 family. Part of the 50S ribosomal subunit. Requires Zn(2+) as cofactor.

Functionally, binds to the 23S rRNA. The protein is Large ribosomal subunit protein eL42 of Pyrococcus abyssi (strain GE5 / Orsay).